The sequence spans 1015 residues: Formate dehydrogenase, nitrate-inducible, major subunit (1015 aa).

A signal peptide (tat-type signal) is located at residues 1–33; the sequence is MDVSRRQFFKICAGGMAGTTVAALGFAPKQALA. Positions 43-106 constitute a 4Fe-4S Mo/W bis-MGD-type domain; sequence AKEIRNTCTY…GLLDYVNSEN (64 aa). [4Fe-4S] cluster-binding residues include Cys50, Cys53, Cys57, and Cys92. Sec196 serves as a coordination point for Mo-bis(molybdopterin guanine dinucleotide). Residue Sec196 is a non-standard amino acid, selenocysteine.

It belongs to the prokaryotic molybdopterin-containing oxidoreductase family. In terms of assembly, trimer of heterotrimers, consisting of subunits alpha, beta and gamma. Requires Mo-bis(molybdopterin guanine dinucleotide) as cofactor. It depends on [4Fe-4S] cluster as a cofactor. Exported by the Tat system. The position of the signal peptide cleavage has not been experimentally proven.

It localises to the periplasm. It carries out the reaction a quinone + formate + H(+) = a quinol + CO2. Functionally, formate dehydrogenase allows E.coli to use formate as major electron donor during anaerobic respiration, when nitrate is used as electron acceptor. The alpha subunit FdnG contains the formate oxidation site. Electrons are transferred from formate to menaquinone in the gamma subunit (FdnI), through the 4Fe-4S clusters in the beta subunit (FdnH). Formate dehydrogenase-N is part of a system that generates proton motive force, together with the dissimilatory nitrate reductase (Nar). In Escherichia coli (strain K12), this protein is Formate dehydrogenase, nitrate-inducible, major subunit (fdnG).